The chain runs to 466 residues: Soluble pyridine nucleotide transhydrogenase (466 aa).

36–45 is a binding site for FAD; it reads ERYHNVGGGC.

Belongs to the class-I pyridine nucleotide-disulfide oxidoreductase family. FAD serves as cofactor.

Its subcellular location is the cytoplasm. The catalysed reaction is NAD(+) + NADPH = NADH + NADP(+). Its function is as follows. Conversion of NADPH, generated by peripheral catabolic pathways, to NADH, which can enter the respiratory chain for energy generation. The protein is Soluble pyridine nucleotide transhydrogenase of Klebsiella pneumoniae subsp. pneumoniae (strain ATCC 700721 / MGH 78578).